A 241-amino-acid chain; its full sequence is Homeobox protein TGIF2LX (241 aa).

Disordered stretches follow at residues 1-56 and 115-213; these read MEAA…PKGY and RHGN…EYPD. Over residues 21-39 the composition is skewed to polar residues; the sequence is AKTQSPAQDTSTVSRNSAD. The segment at residues 48 to 111 is a DNA-binding region (homeobox; TALE-type); it reads EHTKKPKGYL…INARRRILPD (64 aa).

This sequence belongs to the TALE/TGIF homeobox family.

The protein localises to the nucleus. In terms of biological role, may have a transcription role in testis. The sequence is that of Homeobox protein TGIF2LX (TGIF2LX) from Hylobates lar (Lar gibbon).